The sequence spans 387 residues: DNA-damage-repair/toleration protein 111 (387 aa).

A disordered region spans residues 1-213; sequence MLGGLYGDLP…TSGLGVGAGG (213 aa). Residues 19–29 are compositionally biased toward low complexity; it reads SGNSSSVWSSS. Basic and acidic residues predominate over residues 103–158; sequence DPARPNDYEEYKREKKRKATEAEMKREMDKRRQEDEERDKREREEREKERERDNSD. The G-patch domain occupies 214–260; sequence QMTAAQRMMAKMGWKQGQGLGKSEQGITTPLMAKKTDRRAGVIVNAS. Residues 283–369 form the RRM domain; sequence RVLLLRNMVG…RTVRATFYDE (87 aa).

As to quaternary structure, component of the SWAP1-SFPS-RRC1 splicing factor complex which modulates pre-mRNA splicing to promote photomorphogenesis. Interacts with SWAP1 in a light-independent manner. Associates with the photoreceptor phytochrome B (phyB) in nuclear photobodies upon response to red light. Binds to the splicing factor 1 SF1, involved in 3' splicing site recognition. Expressed ubiquitously with highest levels in dry seeds and in cells surrounding the base of trichomes and guard cells.

It is found in the nucleus. The protein localises to the nucleus speckle. As a member of the SWAP1-SFPS-RRC1 splicing factor complex, modulates photomorphogenesis by regulating the gene expression and pre-messenger RNA (mRNA) alternative splicing of a large number of genes, including those involved in plant responses to light signaling, probably by helping in the 3' splice site determination. Associates with and regulates EARLY FLOWERING 3 (ELF3) mRNA processing, a key component of the circadian clock also involved in photomorphogenesis. Required for light-regulated (red, far-red and blue lights) photomorphogenesis in a PHYB- and PHYTOCHROME INTERACTING FACTORS- (PIFs) dependent manner. Promotes flowering under both short (SD) and long days (LD). Controls abscisic acid (ABA) sensitivity during seed development, stomatal responsiveness and germination by monitoring ABI3 splicing, upstream of the splicing factor SUPPRESSOR OF ABI3-ABI5. Seems to be involved in the resistance to UV light and chemical DNA-damaging agents. The protein is DNA-damage-repair/toleration protein 111 of Arabidopsis thaliana (Mouse-ear cress).